The sequence spans 876 residues: SED5-binding protein 2 (876 aa).

Ser51 carries the phosphoserine modification. The segment at 164–189 (CRRCRSYMNPFVVFINQGRKWQCNIC) is zinc finger-like. A compositionally biased stretch (acidic residues) spans 300 to 324 (VSDEDDEESDGEEEDEDEEEEDVDN). Residues 300–326 (VSDEDDEESDGEEEDEDEEEEDVDNSE) are disordered.

This sequence belongs to the SEC23/SEC24 family. SEC24 subfamily. COPII is composed of at least five proteins: the SEC23/24 complex, the SEC13/31 complex and SAR1. Interacts with GRH1.

Its subcellular location is the cytoplasm. It localises to the golgi apparatus membrane. The protein localises to the endoplasmic reticulum membrane. Functionally, component of the COPII coat, that covers ER-derived vesicles involved in transport from the endoplasmic reticulum to the Golgi apparatus. COPII acts in the cytoplasm to promote the transport of secretory, plasma membrane, and vacuolar proteins from the endoplasmic reticulum to the Golgi complex. This is SED5-binding protein 2 (SFB2) from Saccharomyces cerevisiae (strain ATCC 204508 / S288c) (Baker's yeast).